A 500-amino-acid polypeptide reads, in one-letter code: Probable malate:quinone oxidoreductase (500 aa).

This sequence belongs to the MQO family. FAD is required as a cofactor.

The enzyme catalyses (S)-malate + a quinone = a quinol + oxaloacetate. It functions in the pathway carbohydrate metabolism; tricarboxylic acid cycle; oxaloacetate from (S)-malate (quinone route): step 1/1. The chain is Probable malate:quinone oxidoreductase from Gluconobacter oxydans (strain 621H) (Gluconobacter suboxydans).